The primary structure comprises 166 residues: Crossover junction endodeoxyribonuclease RuvC (166 aa).

Active-site residues include Asp-9, Glu-70, and Asp-144. Residues Asp-9, Glu-70, and Asp-144 each coordinate Mg(2+).

The protein belongs to the RuvC family. As to quaternary structure, homodimer which binds Holliday junction (HJ) DNA. The HJ becomes 2-fold symmetrical on binding to RuvC with unstacked arms; it has a different conformation from HJ DNA in complex with RuvA. In the full resolvosome a probable DNA-RuvA(4)-RuvB(12)-RuvC(2) complex forms which resolves the HJ. The cofactor is Mg(2+).

The protein localises to the cytoplasm. It carries out the reaction Endonucleolytic cleavage at a junction such as a reciprocal single-stranded crossover between two homologous DNA duplexes (Holliday junction).. Its function is as follows. The RuvA-RuvB-RuvC complex processes Holliday junction (HJ) DNA during genetic recombination and DNA repair. Endonuclease that resolves HJ intermediates. Cleaves cruciform DNA by making single-stranded nicks across the HJ at symmetrical positions within the homologous arms, yielding a 5'-phosphate and a 3'-hydroxyl group; requires a central core of homology in the junction. The consensus cleavage sequence is 5'-(A/T)TT(C/G)-3'. Cleavage occurs on the 3'-side of the TT dinucleotide at the point of strand exchange. HJ branch migration catalyzed by RuvA-RuvB allows RuvC to scan DNA until it finds its consensus sequence, where it cleaves and resolves the cruciform DNA. In Neorickettsia sennetsu (strain ATCC VR-367 / Miyayama) (Ehrlichia sennetsu), this protein is Crossover junction endodeoxyribonuclease RuvC.